Reading from the N-terminus, the 512-residue chain is Extracellular serine/threonine protein kinase CeFam20 (512 aa).

Topologically, residues 1-6 are cytoplasmic; it reads MRCNIK. The helical; Signal-anchor for type II membrane protein transmembrane segment at 7 to 26 threads the bilayer; sequence RLFTLAIGVFAATLVIISFS. Topologically, residues 27–512 are lumenal; it reads KDNYEREWKQ…QDKKDDKKTV (486 aa). The cysteines at positions 110 and 144 are disulfide-linked. N-linked (GlcNAc...) asparagine glycosylation occurs at asparagine 113. Residues glutamine 176, lysine 192, and glutamate 213 each contribute to the ATP site. Glutamate 213 lines the Mn(2+) pocket. An N-linked (GlcNAc...) asparagine glycan is attached at asparagine 242. 2 disulfides stabilise this stretch: cysteine 268/cysteine 284 and cysteine 273/cysteine 277. An ATP-binding site is contributed by 295–298; it reads QVFL. Intrachain disulfides connect cysteine 333–cysteine 409 and cysteine 410–cysteine 469. Aspartate 366 is a catalytic residue. ATP-binding residues include glutamate 371 and aspartate 387. Aspartate 387 lines the Mn(2+) pocket. Residues 486–512 are disordered; the sequence is PDVSDAEQNDEEQSEEHQDKKDDKKTV. Residues 489-499 are compositionally biased toward acidic residues; it reads SDAEQNDEEQS. Residues 500–512 show a composition bias toward basic and acidic residues; that stretch reads EEHQDKKDDKKTV.

This sequence belongs to the FAM20 family. Mn(2+) is required as a cofactor.

The protein localises to the golgi apparatus membrane. It localises to the secreted. It catalyses the reaction L-seryl-[protein] + ATP = O-phospho-L-seryl-[protein] + ADP + H(+). The catalysed reaction is L-threonyl-[protein] + ATP = O-phospho-L-threonyl-[protein] + ADP + H(+). Its function is as follows. Golgi serine/threonine protein kinase that phosphorylates secretory pathway proteins within Ser-x-Glu/pSer motifs. This chain is Extracellular serine/threonine protein kinase CeFam20, found in Caenorhabditis elegans.